A 435-amino-acid polypeptide reads, in one-letter code: GTPase Obg (435 aa).

The Obg domain maps to 1 to 158; that stretch reads MFIDRAKIYV…RWLYLELKLL (158 aa). Positions 159–328 constitute an OBG-type G domain; that stretch reads ADVGLVGLPN…LLELMEKYVR (170 aa). GTP contacts are provided by residues 165–172, 190–194, 211–214, 280–283, and 309–311; these read GLPNAGKS, FTTKT, DIPG, NKID, and SAK. Mg(2+) is bound by residues serine 172 and threonine 192. The 84-residue stretch at 343-426 folds into the OCT domain; the sequence is IQETKEGRVE…IGDYIFKYNA (84 aa).

It belongs to the TRAFAC class OBG-HflX-like GTPase superfamily. OBG GTPase family. In terms of assembly, monomer. It depends on Mg(2+) as a cofactor.

Its subcellular location is the cytoplasm. Functionally, an essential GTPase which binds GTP, GDP and possibly (p)ppGpp with moderate affinity, with high nucleotide exchange rates and a fairly low GTP hydrolysis rate. Plays a role in control of the cell cycle, stress response, ribosome biogenesis and in those bacteria that undergo differentiation, in morphogenesis control. The sequence is that of GTPase Obg from Dictyoglomus thermophilum (strain ATCC 35947 / DSM 3960 / H-6-12).